A 362-amino-acid chain; its full sequence is Phosphoserine aminotransferase (362 aa).

An L-glutamate-binding site is contributed by R42. Residues A76 to R77, W102, T153, D174, and Q197 each bind pyridoxal 5'-phosphate. Position 198 is an N6-(pyridoxal phosphate)lysine (K198). N239 to T240 provides a ligand contact to pyridoxal 5'-phosphate.

It belongs to the class-V pyridoxal-phosphate-dependent aminotransferase family. SerC subfamily. Homodimer. Pyridoxal 5'-phosphate is required as a cofactor.

The protein resides in the cytoplasm. The catalysed reaction is O-phospho-L-serine + 2-oxoglutarate = 3-phosphooxypyruvate + L-glutamate. The enzyme catalyses 4-(phosphooxy)-L-threonine + 2-oxoglutarate = (R)-3-hydroxy-2-oxo-4-phosphooxybutanoate + L-glutamate. It functions in the pathway amino-acid biosynthesis; L-serine biosynthesis; L-serine from 3-phospho-D-glycerate: step 2/3. Its pathway is cofactor biosynthesis; pyridoxine 5'-phosphate biosynthesis; pyridoxine 5'-phosphate from D-erythrose 4-phosphate: step 3/5. In terms of biological role, catalyzes the reversible conversion of 3-phosphohydroxypyruvate to phosphoserine and of 3-hydroxy-2-oxo-4-phosphonooxybutanoate to phosphohydroxythreonine. The sequence is that of Phosphoserine aminotransferase from Proteus mirabilis (strain HI4320).